Here is a 329-residue protein sequence, read N- to C-terminus: Major outer membrane protein P.IB (329 aa).

An N-terminal signal peptide occupies residues 1–19 (MKKSLIALTLAALPVAAMA).

The protein belongs to the Gram-negative porin family. In terms of assembly, homotrimer.

It localises to the cell outer membrane. Serves as a slightly cation selective porin. This is Major outer membrane protein P.IB (porB) from Neisseria meningitidis serogroup A / serotype 4A (strain DSM 15465 / Z2491).